A 702-amino-acid chain; its full sequence is MQSINQYVWIIPLLPCLTAVILGLGLISTKNATKSQRLGSAILSIGALLVTMLLSITVLWEQVISDSAYRQLVSWIKVDNLFLEIGCLVDPLSAIMLVLVTTVGVLVMIYTHGYMSHDQGYVRFFAYLSLFTASMLGLVLSPNLVQVYAFWELVGMCSYLLVGFWFTRPSAAYACQKAFITNRVGDFGLLLGILALYWLTGSLEFDIVASRAHQLLVENSANTVLLTVCCVLLFLGPIAKSAQFPLHVWLPDAMEGPTPISALIHAATMVAAGVYLVARLLPLFQEVPLVMDIVAWTGGITAVLGATVALAQKDLKKGLAYSTMSQLGYMILALGVGSYQAGLFHLITHAYSKALLFLGSGSVIHGIEPVVGYNPNQSQNMTYMGGLRSYMPITGVTFLIGTLSLCGVPPFACFWSKDEILADAWHKLPVLGLLAWLTAGLTAFYMFRMYFITFEGTFRGSSLISNKSSKQTLSVNKMDSVFALSNQTKDNTSLKASKHLDPHESSNAMTIPLIVLTIPTILIGFIGAPLPNGLTGSSLLSHWLYLDNTEIVELSTNGWTEFAITALPSVSIGILGAFIAWIVYGPHVDRLKNNPVSIDPSAEGWTGILLNSIYNWSLRRAYIDEIYDQTFVWATRSSANALAWFDQWTIDGIVNVGGLFTLLGGEGTRYTESGRTSAYIFVLGIGLVFVMIAAVLFNFFHL.

16 helical membrane passes run 7-27, 40-60, 91-111, 124-144, 147-167, 189-209, 224-244, 258-278, 289-309, 327-347, 354-374, 395-415, 427-447, 511-531, 562-582, and 680-700; these read YVWI…LGLI, SAIL…TVLW, PLSA…MIYT, FFAY…SPNL, VYAF…FWFT, LLLG…DIVA, VLLT…SAQF, TPIS…YLVA, LVMD…ATVA, LGYM…FHLI, ALLF…VGYN, GVTF…ACFW, KLPV…FYMF, IPLI…APLP, FAIT…IAWI, and IFVL…FNFF.

This sequence belongs to the complex I subunit 5 family. As to quaternary structure, NDH is composed of at least 16 different subunits, 5 of which are encoded in the nucleus.

The protein localises to the plastid. It localises to the chloroplast thylakoid membrane. The enzyme catalyses a plastoquinone + NADH + (n+1) H(+)(in) = a plastoquinol + NAD(+) + n H(+)(out). It catalyses the reaction a plastoquinone + NADPH + (n+1) H(+)(in) = a plastoquinol + NADP(+) + n H(+)(out). NDH shuttles electrons from NAD(P)H:plastoquinone, via FMN and iron-sulfur (Fe-S) centers, to quinones in the photosynthetic chain and possibly in a chloroplast respiratory chain. The immediate electron acceptor for the enzyme in this species is believed to be plastoquinone. Couples the redox reaction to proton translocation, and thus conserves the redox energy in a proton gradient. In Zygnema circumcarinatum (Green alga), this protein is NAD(P)H-quinone oxidoreductase subunit 5, chloroplastic (ndhF).